The primary structure comprises 168 residues: Pathogenesis-related protein 1C (168 aa).

The signal sequence occupies residues 1 to 30 (MEFVLFSQMSSFFLVSTLLLFLIISHSCHA). The region spanning 38–156 (LDAHNTARAD…NGGYIVSCNY (119 aa)) is the SCP domain.

This sequence belongs to the CRISP family. Post-translationally, three disulfide bonds are present.

It is found in the vacuole. Its function is as follows. Probably involved in the defense reaction of plants against pathogens. The polypeptide is Pathogenesis-related protein 1C (Nicotiana tabacum (Common tobacco)).